A 365-amino-acid polypeptide reads, in one-letter code: Prostaglandin E2 receptor EP3 subtype (365 aa).

Residues 1 to 22 are disordered; that stretch reads MASMWAPEHSAEAHSNLSSTTD. At 1–30 the chain is on the extracellular side; the sequence is MASMWAPEHSAEAHSNLSSTTDDCGSVSVA. Positions 13 to 22 are enriched in polar residues; the sequence is AHSNLSSTTD. N-linked (GlcNAc...) asparagine glycosylation is present at Asn-16. A helical transmembrane segment spans residues 31 to 55; that stretch reads FPITMMVTGFVGNALAMLLVSRSYR. Residues 56–68 lie on the Cytoplasmic side of the membrane; sequence RRESKRKKSFLLC. The chain crosses the membrane as a helical span at residues 69-89; it reads IGWLALTDLVGQLLTSPVVIL. The Extracellular segment spans residues 90–108; it reads VYLSQRRWEQLDPSGRLCT. Cysteines 107 and 184 form a disulfide. Residues 109 to 130 form a helical membrane-spanning segment; that stretch reads FFGLTMTVFGLSSLLVASAMAV. At 131-151 the chain is on the cytoplasmic side; it reads ERALAIRAPHWYASHMKTRAT. Residues 152–173 form a helical membrane-spanning segment; sequence PVLLGVWLSVLAFALLPVLGVG. The Extracellular segment spans residues 174-203; the sequence is RYSVQWPGTWCFISTGPAGNETDPAREPGS. Asn-193 carries an N-linked (GlcNAc...) asparagine glycan. A helical membrane pass occupies residues 204 to 229; that stretch reads VAFASAFACLGLLALVVTFACNLATI. Residues 230 to 259 are Cytoplasmic-facing; the sequence is KALVSRCRAKAAVSQSSAQWGRITTETAIQ. The helical transmembrane segment at 260–283 threads the bilayer; that stretch reads LMGIMCVLSVCWSPLLIMMLKMIF. Residues 284–303 are Extracellular-facing; that stretch reads NQMSVEQCKTQMGKEKECNS. A helical membrane pass occupies residues 304–325; the sequence is FLIAVRLASLNQILDPWVYLLL. Over 326 to 365 the chain is Cytoplasmic; it reads RKILLRKFCQIRDHTNYASSSTSLPCPGSSALMWSDQLER.

The protein belongs to the G-protein coupled receptor 1 family. Interacts (via C-terminus) with MKLN1. Ligand binding is affected by cAMP-dependent phosphorylation in brain membranes. In terms of tissue distribution, detected in platelets. Kidney, uterus, and mastocytoma cells, and in a lesser amount in brain, thymus, lung, heart, stomach and spleen.

Its subcellular location is the cell membrane. In terms of biological role, receptor for prostaglandin E2 (PGE2). Required for normal development of fever in response to pyrinogens, including IL1B, prostaglandin E2 and bacterial lipopolysaccharide (LPS). Required for normal potentiation of platelet aggregation by prostaglandin E2, and thus plays a role in the regulation of blood coagulation. Required for increased HCO3(-) secretion in the duodenum in response to mucosal acidification, and thereby contributes to the protection of the mucosa against acid-induced ulceration. Not required for normal kidney function, normal urine volume and osmolality. Functionally, receptor for prostaglandin E2 (PGE2); ligand binding activates a signaling cascade via G(i) proteins that leads to inhibition of adenylate cyclase. Shows high agonist-independent constitutive inhibition of adenylate cyclase. Its function is as follows. Receptor for prostaglandin E2 (PGE2); ligand binding activates a signaling cascade via G(i) proteins that leads to inhibition of adenylate cyclase. Requires much higher ligand concentrations than isoform Alpha for activation. Does not display agonist-independent constitutive inhibition of adenylate cyclase. Receptor for prostaglandin E2 (PGE2); ligand binding can activate several distinct signaling cascades, resulting in activation or inhibition of adenylate cyclase. This Mus musculus (Mouse) protein is Prostaglandin E2 receptor EP3 subtype (Ptger3).